Consider the following 97-residue polypeptide: uncharacterized protein (97 aa).

The next 3 membrane-spanning stretches (helical) occupy residues 7–27 (CIAP…IGLG), 34–54 (IPML…LMFS), and 69–89 (IVLY…PTIL).

The protein localises to the cell membrane. This is an uncharacterized protein from Haemophilus influenzae (strain ATCC 51907 / DSM 11121 / KW20 / Rd).